Reading from the N-terminus, the 253-residue chain is E3 ubiquitin-protein ligase MARCHF3 (253 aa).

An RING-CH-type zinc finger spans residues 63–123 (SPFNDRPMCR…ELCHFRFAVE (61 aa)). 8 residues coordinate Zn(2+): C71, C74, C87, C89, H97, C100, C113, and C116. 2 helical membrane passes run 145-165 (LFGD…SGWL) and 182-202 (AVGL…WTLV). S237 and S243 each carry phosphoserine.

In terms of assembly, interacts with MARCHF2 and STX6.

The protein localises to the cytoplasmic vesicle membrane. Its subcellular location is the early endosome membrane. The catalysed reaction is S-ubiquitinyl-[E2 ubiquitin-conjugating enzyme]-L-cysteine + [acceptor protein]-L-lysine = [E2 ubiquitin-conjugating enzyme]-L-cysteine + N(6)-ubiquitinyl-[acceptor protein]-L-lysine.. It participates in protein modification; protein ubiquitination. E3 ubiquitin-protein ligase which may be involved in endosomal trafficking. E3 ubiquitin ligases accept ubiquitin from an E2 ubiquitin-conjugating enzyme in the form of a thioester and then directly transfer the ubiquitin to targeted substrates. The sequence is that of E3 ubiquitin-protein ligase MARCHF3 from Homo sapiens (Human).